The chain runs to 84 residues: U8-theraphotoxin-Hhn1e (84 aa).

The signal sequence occupies residues 1–21 (MKVVLLVCLVWMMAMMELVSC). Cystine bridges form between cysteine 23–cysteine 35, cysteine 29–cysteine 44, cysteine 34–cysteine 67, cysteine 54–cysteine 75, and cysteine 69–cysteine 81.

The protein belongs to the AVIT (prokineticin) family. Expressed by the venom gland.

Its subcellular location is the secreted. This Cyriopagopus hainanus (Chinese bird spider) protein is U8-theraphotoxin-Hhn1e.